Reading from the N-terminus, the 523-residue chain is Ribosomal protein uS12 methylthiotransferase RimO (523 aa).

The 128-residue stretch at 7–134 folds into the MTTase N-terminal domain; it reads RRVALITLGC…IATHLAAVLA (128 aa). Residues C16, C52, C97, C192, C196, and C199 each contribute to the [4Fe-4S] cluster site. A Radical SAM core domain is found at 178-409; that stretch reads LTAGPVAVLK…DLVEQLTAAR (232 aa). Positions 411–492 constitute a TRAM domain; sequence DARIGSRVQV…GVDLIAEFIA (82 aa).

This sequence belongs to the methylthiotransferase family. RimO subfamily. [4Fe-4S] cluster is required as a cofactor.

The protein localises to the cytoplasm. It catalyses the reaction L-aspartate(89)-[ribosomal protein uS12]-hydrogen + (sulfur carrier)-SH + AH2 + 2 S-adenosyl-L-methionine = 3-methylsulfanyl-L-aspartate(89)-[ribosomal protein uS12]-hydrogen + (sulfur carrier)-H + 5'-deoxyadenosine + L-methionine + A + S-adenosyl-L-homocysteine + 2 H(+). Catalyzes the methylthiolation of an aspartic acid residue of ribosomal protein uS12. In Frankia casuarinae (strain DSM 45818 / CECT 9043 / HFP020203 / CcI3), this protein is Ribosomal protein uS12 methylthiotransferase RimO.